The primary structure comprises 99 residues: A-type ATP synthase subunit F (99 aa).

The protein belongs to the V-ATPase F subunit family. As to quaternary structure, has multiple subunits with at least A(3), B(3), C, D, E, F, H, I and proteolipid K(x).

It localises to the cell membrane. Functionally, component of the A-type ATP synthase that produces ATP from ADP in the presence of a proton gradient across the membrane. The protein is A-type ATP synthase subunit F of Methanococcus maripaludis (strain C6 / ATCC BAA-1332).